Reading from the N-terminus, the 202-residue chain is dITP/XTP pyrophosphatase (202 aa).

9 to 14 is a substrate binding site; the sequence is TGNKGK. D73 serves as the catalytic Proton acceptor. Residue D73 coordinates Mg(2+). Substrate-binding positions include S74, 158 to 161, K181, and 186 to 187; these read FGYD and HR.

It belongs to the HAM1 NTPase family. Homodimer. The cofactor is Mg(2+).

The enzyme catalyses XTP + H2O = XMP + diphosphate + H(+). It carries out the reaction dITP + H2O = dIMP + diphosphate + H(+). It catalyses the reaction ITP + H2O = IMP + diphosphate + H(+). Its function is as follows. Pyrophosphatase that catalyzes the hydrolysis of nucleoside triphosphates to their monophosphate derivatives, with a high preference for the non-canonical purine nucleotides XTP (xanthosine triphosphate), dITP (deoxyinosine triphosphate) and ITP. Seems to function as a house-cleaning enzyme that removes non-canonical purine nucleotides from the nucleotide pool, thus preventing their incorporation into DNA/RNA and avoiding chromosomal lesions. This is dITP/XTP pyrophosphatase from Lactobacillus acidophilus (strain ATCC 700396 / NCK56 / N2 / NCFM).